Here is a 437-residue protein sequence, read N- to C-terminus: Adenylosuccinate lyase (437 aa).

Residues 4–5 (RY), 70–72 (KHD), and 96–97 (TS) each bind N(6)-(1,2-dicarboxyethyl)-AMP. H144 acts as the Proton donor/acceptor in catalysis. N(6)-(1,2-dicarboxyethyl)-AMP is bound at residue Q215. S265 acts as the Proton donor/acceptor in catalysis. Residues S266, 271 to 273 (KKN), and 310 to 314 (SVERV) each bind N(6)-(1,2-dicarboxyethyl)-AMP.

This sequence belongs to the lyase 1 family. Adenylosuccinate lyase subfamily. As to quaternary structure, homooligomer. Residues from neighboring subunits contribute catalytic and substrate-binding residues to each active site.

It carries out the reaction N(6)-(1,2-dicarboxyethyl)-AMP = fumarate + AMP. It catalyses the reaction (2S)-2-[5-amino-1-(5-phospho-beta-D-ribosyl)imidazole-4-carboxamido]succinate = 5-amino-1-(5-phospho-beta-D-ribosyl)imidazole-4-carboxamide + fumarate. It functions in the pathway purine metabolism; AMP biosynthesis via de novo pathway; AMP from IMP: step 2/2. Its pathway is purine metabolism; IMP biosynthesis via de novo pathway; 5-amino-1-(5-phospho-D-ribosyl)imidazole-4-carboxamide from 5-amino-1-(5-phospho-D-ribosyl)imidazole-4-carboxylate: step 2/2. Its function is as follows. Catalyzes two reactions in de novo purine nucleotide biosynthesis. Catalyzes the breakdown of 5-aminoimidazole- (N-succinylocarboxamide) ribotide (SAICAR or 2-[5-amino-1-(5-phospho-beta-D-ribosyl)imidazole-4-carboxamido]succinate) to 5-aminoimidazole-4-carboxamide ribotide (AICAR or 5-amino-1-(5-phospho-beta-D-ribosyl)imidazole-4-carboxamide) and fumarate, and of adenylosuccinate (ADS or N(6)-(1,2-dicarboxyethyl)-AMP) to adenosine monophosphate (AMP) and fumarate. The chain is Adenylosuccinate lyase (purB) from Aquifex aeolicus (strain VF5).